Here is a 734-residue protein sequence, read N- to C-terminus: MASRFPKFSQGLSQDPTTRRIWFGIATAHDFESHDGITEEKLYQKIFASHFGQLAVIFLWTSGNLFHVAWQGNFEAWSQDPLHVRPIAHAIWDPHFGQPAVEAFTRGGASGPVNISYSGVYQWWYTQGIRTNLELYQGALFLLGLAAVSLAAGWLHLQPKWQPKISWFKNAESRLNHHLSGLFGVSSLAWSGHLVHVAIPESRGQHVGWDNLLTTLPHPAGLAPFFSGQWSVYSQNPDSASHLFSTSQGSGTAILTFLGGFHPQTQSLWLTDIAHHHLAIAVLFIIAGHQYRTNFGIGHSIREILESHVPPGGGLGQGHKGLYDTLNNSLHFQLGLALASLGVITSLVAQHMYSLPSYAFIAQDFTTQAALYTHHQYIAGFIMSGAFAHGAIFFIRDYNPEQNKGNVLARMLEHKEAIISHLSWASLFLGFHTLGLYVHNDVVQAFGNPEKQILIEPVFAQWIQSSHGKTLYGFDVFLSSTASPAFYAGQSLWLPGWLDSINSNTNSLFLTIGPGDFLVHHAIALGLHTTTLILVKGALDARGSKLMPDKKEFGYSFPCDGPGRGGTCDISAWDAFYLAIFWMLNTIGWVTFYWHWKHLALWQGNAAQFNESSTYLMGWLRDYLWLNSSQLINGYNPFGMNSLSVWAWMFLFGHLIWATGFMFLISWRGYWQELIETLAWAHERTPLANLVRWKDKPVALSIVQARLVGLAHFSVGYIFTYAAFLIASTSGKFG.

The next 8 helical transmembrane spans lie at I46–A69, L135–Q158, L175–I199, I273–Y291, L330–Y353, A369–I395, A417–H439, and F517–V535. Residues C559 and C568 each contribute to the [4Fe-4S] cluster site. 2 consecutive transmembrane segments (helical) span residues A575 to W596 and L643 to I665. H654, M662, and Y670 together coordinate chlorophyll a. Residue W671 participates in phylloquinone binding. The helical transmembrane segment at L707–A727 threads the bilayer.

The protein belongs to the PsaA/PsaB family. The PsaA/B heterodimer binds the P700 chlorophyll special pair and subsequent electron acceptors. PSI consists of a core antenna complex that captures photons, and an electron transfer chain that converts photonic excitation into a charge separation. The eukaryotic PSI reaction center is composed of at least 11 subunits. The cofactor is P700 is a chlorophyll a/chlorophyll a' dimer, A0 is one or more chlorophyll a, A1 is one or both phylloquinones and FX is a shared 4Fe-4S iron-sulfur center..

It localises to the plastid. The protein localises to the chloroplast thylakoid membrane. It catalyses the reaction reduced [plastocyanin] + hnu + oxidized [2Fe-2S]-[ferredoxin] = oxidized [plastocyanin] + reduced [2Fe-2S]-[ferredoxin]. PsaA and PsaB bind P700, the primary electron donor of photosystem I (PSI), as well as the electron acceptors A0, A1 and FX. PSI is a plastocyanin-ferredoxin oxidoreductase, converting photonic excitation into a charge separation, which transfers an electron from the donor P700 chlorophyll pair to the spectroscopically characterized acceptors A0, A1, FX, FA and FB in turn. Oxidized P700 is reduced on the lumenal side of the thylakoid membrane by plastocyanin. The sequence is that of Photosystem I P700 chlorophyll a apoprotein A2 from Chaetosphaeridium globosum (Charophycean green alga).